Consider the following 408-residue polypeptide: Putative transporter AmpG 2 (408 aa).

The next 11 helical transmembrane spans lie at 11–31 (IFNILFILIIAFPGGLIYLLT), 49–69 (IGLFGLVNFIHIFKFLWGPLL), 84–104 (YCLVITLINCIFCVYVLTSFN), 110–130 (IPFVLCLVVLAFFSSIYDMLI), 154–174 (FRIGILISGSGALYLSTIISW), 177–197 (VYRTMAILCIPSLLLIIFYPL), 224–244 (CIVIISFMLLYRLQDSFLSIM), 261–281 (VGYKAFGMCATIFGGVIGGFL), 294–311 (VLIYHALSSLSFIYLYFL), 353–373 (IALITSITNVGTILIGSISGY), and 382–402 (YFFIVAGLCFIPAYILILYLP).

It belongs to the major facilitator superfamily.

The protein resides in the cell inner membrane. The polypeptide is Putative transporter AmpG 2 (ampG2) (Rickettsia prowazekii (strain Madrid E)).